Consider the following 524-residue polypeptide: Probable beta-1,4-xylosyltransferase IRX14 (524 aa).

Residues 1-51 (MMKSLLPQSQLRRSAAAASAARSSGGGAGSGGADGAGSDGGAGGRAPATST) are Cytoplasmic-facing. A disordered region spans residues 21–41 (ARSSGGGAGSGGADGAGSDGG). Over residues 24 to 41 (SGGGAGSGGADGAGSDGG) the composition is skewed to gly residues. A helical; Signal-anchor for type II membrane protein membrane pass occupies residues 52–71 (FWFLLHALCCLVSLFLGFRF). Residues 72-524 (SRLLFFLLFS…SRSTTKRKEN (453 aa)) are Lumenal-facing. Asn-132, Asn-135, Asn-240, and Asn-353 each carry an N-linked (GlcNAc...) asparagine glycan. Residues 492 to 524 (AELVDSKQDQEGRRLSRTDRSSRSRSTTKRKEN) form a disordered region. The span at 495 to 513 (VDSKQDQEGRRLSRTDRSS) shows a compositional bias: basic and acidic residues.

The protein belongs to the glycosyltransferase 43 family.

It localises to the golgi apparatus membrane. Functionally, probable beta-1,4-xylosyltransferase involved in xylan biosynthesis in cell walls. This is Probable beta-1,4-xylosyltransferase IRX14 from Oryza sativa subsp. japonica (Rice).